The primary structure comprises 928 residues: cGMP-dependent 3',5'-cyclic phosphodiesterase (928 aa).

A Phosphoserine modification is found at S109. The segment at 188 to 210 (RRPEAVQNTSADPSEDQKDEKGY) is disordered. 2 consecutive GAF domains span residues 228–365 (DATS…GTVL) and 397–536 (DVSV…GISI). 3',5'-cyclic GMP is bound by residues S419, D434, I453, Y476, and T487. The PDEase domain occupies 566 to 890 (SDDEYTKLLH…EHWTKVSHKF (325 aa)). Catalysis depends on H644, which acts as the Proton donor. The Zn(2+) site is built by H648, H684, D685, and D796. Mg(2+) is bound at residue D685.

It belongs to the cyclic nucleotide phosphodiesterase family. PDE2 subfamily. In terms of assembly, homodimer. It depends on Zn(2+) as a cofactor. Mg(2+) is required as a cofactor. In terms of tissue distribution, expressed in brain and liver.

The protein resides in the cell membrane. Its subcellular location is the cytoplasm. It localises to the mitochondrion matrix. It is found in the mitochondrion inner membrane. The protein localises to the mitochondrion outer membrane. It carries out the reaction a nucleoside 3',5'-cyclic phosphate + H2O = a nucleoside 5'-phosphate + H(+). The catalysed reaction is 3',5'-cyclic GMP + H2O = GMP + H(+). It catalyses the reaction 3',5'-cyclic AMP + H2O = AMP + H(+). With respect to regulation, the 3',5'-cyclic-AMP phosphodiesterase activity is stimulated by 3',5'-cyclic GMP. Specifically inhibited by Bay 60-7550. When repressed, protected from ionomycin- but not staurosporin-induced cell death. Its function is as follows. cGMP-activated cyclic nucleotide phosphodiesterase with a dual-specificity for the second messengers cAMP and cGMP, which are key regulators of many important physiological processes. Has a higher efficiency with cGMP compared to cAMP. Plays a role in cell growth and migration. Functionally, regulates mitochondrial cAMP levels and respiration. Involved in the regulation of mitochondria morphology/dynamics and apoptotic cell death via local modulation of cAMP/PKA signaling in the mitochondrion, including the monitoring of local cAMP levels at the outer mitochondrial membrane and of PKA-dependent phosphorylation of Dnm1l. The protein is cGMP-dependent 3',5'-cyclic phosphodiesterase of Rattus norvegicus (Rat).